Consider the following 429-residue polypeptide: Apolipoprotein A-IV (429 aa).

Residues 1–20 (MFLKAVVLTLALVAVTGARA) form the signal peptide. Repeat copies occupy residues 33–54 (DYFS…KSEL), 60–81 (ALFQ…KKLV), 82–103 (PFAT…EEIR), 115–136 (PHAN…QRLE), 137–158 (PYTD…RQLT), 159–180 (PYAQ…TSLR), 181–202 (PHAD…ERLT), 203–224 (PYAD…RSLA), 225–246 (PYAQ…FQMK), 247–268 (KNAE…QRLA), 269–286 (PLAE…EGLQ), 287–308 (KSLA…LRVE), and 309–330 (PYGE…QKLG). Positions 33 to 330 (DYFSQLSSNA…QMEQLRQKLG (298 aa)) are 13 X 22 AA approximate tandem repeats. The tract at residues 359–429 (KEKESQDNTL…QVQMLAPLES (71 aa)) is disordered. Residues 381-420 (QEQQQEQEQEQQQQQEQQQQQEQQREQQQQEQQQEQQQEQ) show a composition bias toward low complexity.

This sequence belongs to the apolipoprotein A1/A4/E family. In terms of assembly, homodimer. In terms of processing, phosphorylation sites are present in the extracellular medium. As to expression, secreted in plasma.

It localises to the secreted. In terms of biological role, may have a role in chylomicrons and VLDL secretion and catabolism. Required for efficient activation of lipoprotein lipase by ApoC-II; potent activator of LCAT. Apoa-IV is a major component of HDL and chylomicrons. The protein is Apolipoprotein A-IV (APOA4) of Macaca fascicularis (Crab-eating macaque).